Reading from the N-terminus, the 72-residue chain is Male-specific sperm protein Mst84Dd (72 aa).

It belongs to the MST(3)CGP family. As to expression, testis.

The polypeptide is Male-specific sperm protein Mst84Dd (Mst84Dd) (Drosophila melanogaster (Fruit fly)).